Consider the following 745-residue polypeptide: MKRSSSMLDINEDSQHSTNKAPPPKKAPEDRFDSANMNASGSHVTLVENLPVEKVSSGERIAILDFGAQYGKVIDRRVRELLVQSEMFPLNTTARTLIELGGFKGIIISGGPNSVFEPEAPSIDPEIFTCGLPVLGICYGFQLMNKLNGGTVTREHIREDGACEIQVDTSVHLFNGLHKTETVLLTHGDSVSEATVAPDFKVMAKSGHHVAGICNENRKLYGVQFHPEVDLTTNGTKMFENFLFKVVGCCGNFTIQNREQSCISEINSIVGDKKVLVMVSGGVDSAVCAALLRRALGPNRVTAIHIDNGFMRHEESDAVEKSLAALDLPIHRYNFGTTFRSSTEHCKDGEVALDECDDPEMKRKIIGNTFIRVKDVIMKDLNINHDEYFLAQGTLRPDLIESASALASGHADTIKTHHNDTFLVRELRKLGKVVEPLKDFHKDEVRELGKDLGLPESIVQRHPFPGPGLAIRILCASDKRPELMFNGPMYNGDVQGRIIDVTEQFLNSAINPSQGIYEHLQFEQARNNVLLSLSERDRQLAEQQTFQISAHILPIKTVGVQGDARSYSYAVALSTEQRPIPWKLLFAYASVIPKLFHGVNRVVYAFGSKIEFSIEDLTRTYLVPHIVTKLQMADHIANNILFGRVAASDGTQLPNVGHKIQQMPVVLLPVDFDRDRDMIGSYRHSIVLRPFVTSDFMTGQAAIPGVHLPEETLIEMDKAIRTNVLGISRVLLDMTCKPPGTTEWE.

Residues 1–37 are disordered; sequence MKRSSSMLDINEDSQHSTNKAPPPKKAPEDRFDSANM. Residues 60–252 enclose the Glutamine amidotransferase type-1 domain; it reads RIAILDFGAQ…LFKVVGCCGN (193 aa). Residue cysteine 138 is the For GATase activity of the active site. Active-site residues include histidine 226 and glutamate 228. The region spanning 253–461 is the GMPS ATP-PPase domain; sequence FTIQNREQSC…LGLPESIVQR (209 aa). An ATP-binding site is contributed by 280–286; that stretch reads SGGVDSA. Arginine 363, aspartate 563, glutamine 662, lysine 737, and glutamate 743 together coordinate substrate.

In terms of assembly, homodimer.

It catalyses the reaction XMP + L-glutamine + ATP + H2O = GMP + L-glutamate + AMP + diphosphate + 2 H(+). It functions in the pathway purine metabolism; GMP biosynthesis; GMP from XMP (L-Gln route): step 1/1. This chain is Probable GMP synthase [glutamine-hydrolyzing] (gmps-1), found in Caenorhabditis elegans.